Consider the following 218-residue polypeptide: Cytochrome b6 (218 aa).

A helical membrane pass occupies residues 35–55; that stretch reads IFYCLGGITLVCFLIQFATGF. A heme c-binding site is contributed by cysteine 38. Residues histidine 89 and histidine 103 each contribute to the heme b site. The next 3 membrane-spanning stretches (helical) occupy residues 93–113, 119–139, and 189–209; these read ASMMVLMLILHVFRVYLTGGF, LTWVTGVVMAVITVAFGVTGY, and LHTFVLPWTLAIFMLMHFLMI. Residues histidine 190 and histidine 205 each coordinate heme b.

The protein belongs to the cytochrome b family. PetB subfamily. As to quaternary structure, the 4 large subunits of the cytochrome b6-f complex are cytochrome b6, subunit IV (17 kDa polypeptide, PetD), cytochrome f and the Rieske protein, while the 4 small subunits are PetG, PetL, PetM and PetN. The complex functions as a dimer. Heme b is required as a cofactor. Requires heme c as cofactor.

It is found in the cellular thylakoid membrane. In terms of biological role, component of the cytochrome b6-f complex, which mediates electron transfer between photosystem II (PSII) and photosystem I (PSI), cyclic electron flow around PSI, and state transitions. This Prochlorococcus marinus (strain SARG / CCMP1375 / SS120) protein is Cytochrome b6.